A 1367-amino-acid polypeptide reads, in one-letter code: Mediator of RNA polymerase II transcription subunit 23 (1367 aa).

Residues 1343-1367 form a disordered region; that stretch reads PPQALSSGSPAPQANQVPTALPVTQ. Over residues 1346-1367 the composition is skewed to polar residues; it reads ALSSGSPAPQANQVPTALPVTQ.

It belongs to the Mediator complex subunit 23 family. Component of the Mediator complex, which is composed of MED1, MED4, MED6, MED7, MED8, MED9, MED10, MED11, MED12, MED13, MED13L, MED14, MED15, MED16, MED17, MED18, MED19, MED20, MED21, MED22, MED23, MED24, MED25, MED26, MED27, MED29, MED30, MED31, CCNC, CDK8 and CDC2L6/CDK11. The MED12, MED13, CCNC and CDK8 subunits form a distinct module termed the CDK8 module. Mediator containing the CDK8 module is less active than Mediator lacking this module in supporting transcriptional activation. Individual preparations of the Mediator complex lacking one or more distinct subunits have been variously termed ARC, CRSP, DRIP, PC2, SMCC and TRAP. Interacts with CDK8, CEBPB, CTNNB1, ELK1 and GLI3. Interacts with the adenovirus E1A protein.

The protein resides in the nucleus. Functionally, component of the Mediator complex, a coactivator involved in the regulated transcription of nearly all RNA polymerase II-dependent genes. Mediator functions as a bridge to convey information from gene-specific regulatory proteins to the basal RNA polymerase II transcription machinery. Mediator is recruited to promoters by direct interactions with regulatory proteins and serves as a scaffold for the assembly of a functional pre-initiation complex with RNA polymerase II and the general transcription factors. Also required for transcriptional activation subsequent to the assembly of the pre-initiation complex. Required for transcriptional activation by adenovirus E1A protein. Required for ELK1-dependent transcriptional activation in response to activated Ras signaling. This is Mediator of RNA polymerase II transcription subunit 23 (Med23) from Rattus norvegicus (Rat).